The primary structure comprises 150 residues: Flagellar assembly factor FliW (150 aa).

Belongs to the FliW family. In terms of assembly, interacts with translational regulator CsrA and flagellin(s).

It localises to the cytoplasm. Acts as an anti-CsrA protein, binds CsrA and prevents it from repressing translation of its target genes, one of which is flagellin. Binds to flagellin and participates in the assembly of the flagellum. The protein is Flagellar assembly factor FliW of Leptospira borgpetersenii serovar Hardjo-bovis (strain JB197).